A 197-amino-acid chain; its full sequence is ATP-dependent Clp protease proteolytic subunit (197 aa).

The active-site Nucleophile is the Ser-98. His-123 is a catalytic residue.

Belongs to the peptidase S14 family. In terms of assembly, fourteen ClpP subunits assemble into 2 heptameric rings which stack back to back to give a disk-like structure with a central cavity, resembling the structure of eukaryotic proteasomes.

Its subcellular location is the cytoplasm. It catalyses the reaction Hydrolysis of proteins to small peptides in the presence of ATP and magnesium. alpha-casein is the usual test substrate. In the absence of ATP, only oligopeptides shorter than five residues are hydrolyzed (such as succinyl-Leu-Tyr-|-NHMec, and Leu-Tyr-Leu-|-Tyr-Trp, in which cleavage of the -Tyr-|-Leu- and -Tyr-|-Trp bonds also occurs).. Cleaves peptides in various proteins in a process that requires ATP hydrolysis. Has a chymotrypsin-like activity. Plays a major role in the degradation of misfolded proteins. This is ATP-dependent Clp protease proteolytic subunit from Ligilactobacillus salivarius (strain UCC118) (Lactobacillus salivarius).